We begin with the raw amino-acid sequence, 658 residues long: ATP-dependent RNA helicase DDX3Y (658 aa).

Over residues 1–10 the composition is skewed to basic and acidic residues; the sequence is MSHVVVKNDP. Residues 1–141 form a disordered region; sequence MSHVVVKNDP…DDWSKPLPPS (141 aa). At S2 the chain carries N-acetylserine. Over residues 15-34 the composition is skewed to polar residues; that stretch reads QLANLDLNSEKQSGGASTAS. The span at 44-68 shows a compositional bias: basic and acidic residues; the sequence is RNREASKGFHDKDSSGWSCSKDKDA. Residue K55 is modified to N6-acetyllysine. 3 positions are modified to phosphoserine: S81, S85, and S89. Basic and acidic residues predominate over residues 93-128; it reads GRFDDRGRSDYDGIGNRDRPGFGRFERSGHSRWCDK. R100 carries the omega-N-methylarginine modification. The residue at position 101 (S101) is a Phosphoserine. Y103 carries the phosphotyrosine modification. The residue at position 109 (R109) is an Omega-N-methylarginine. Phosphoserine occurs at positions 129 and 181. The Q motif motif lies at 178–206; the sequence is ENFSDIDMGEIIMGNIELTRYTRPTPVQK. Position 198–205 (198–205) interacts with ATP; the sequence is YTRPTPVQ. Residues 209 to 401 enclose the Helicase ATP-binding domain; the sequence is IPIIKGKRDL…RDFLDEYIFL (193 aa). A Glycyl lysine isopeptide (Lys-Gly) (interchain with G-Cter in SUMO2) cross-link involves residue K213. An ATP-binding site is contributed by 222 to 229; sequence AQTGSGKT. The short motif at 345 to 348 is the DEAD box element; that stretch reads DEAD. The 162-residue stretch at 412–573 folds into the Helicase C-terminal domain; that stretch reads NITQKVVWVE…EVPSWLENMA (162 aa). S454 is subject to Phosphoserine. The residue at position 588 (R588) is an Omega-N-methylarginine. Phosphoserine occurs at positions 590 and 601. The segment at 597–625 is disordered; sequence DYRQSSGSSSSGFGASRGSSSRSGGSGYG. A compositionally biased stretch (low complexity) spans 601-619; the sequence is SSGSSSSGFGASRGSSSRS. R613 and R628 each carry omega-N-methylarginine.

Belongs to the DEAD box helicase family. DDX3/DED1 subfamily. As to quaternary structure, may interact with TDRD3.

It is found in the cytoplasm. It localises to the nucleus. It catalyses the reaction ATP + H2O = ADP + phosphate + H(+). Its function is as follows. Probable ATP-dependent RNA helicase. May play a role in spermatogenesis. The protein is ATP-dependent RNA helicase DDX3Y (DDX3Y) of Pongo abelii (Sumatran orangutan).